A 156-amino-acid polypeptide reads, in one-letter code: Small ribosomal subunit protein uS7 (156 aa).

It belongs to the universal ribosomal protein uS7 family. In terms of assembly, part of the 30S ribosomal subunit. Contacts proteins S9 and S11.

Functionally, one of the primary rRNA binding proteins, it binds directly to 16S rRNA where it nucleates assembly of the head domain of the 30S subunit. Is located at the subunit interface close to the decoding center, probably blocks exit of the E-site tRNA. In Shewanella sp. (strain MR-7), this protein is Small ribosomal subunit protein uS7.